A 281-amino-acid chain; its full sequence is Nucleotide-binding protein MADE_1004170 (281 aa).

Position 8-15 (8-15 (GRSGSGKS)) interacts with ATP. Position 56–59 (56–59 (DVRN)) interacts with GTP.

It belongs to the RapZ-like family.

Functionally, displays ATPase and GTPase activities. The chain is Nucleotide-binding protein MADE_1004170 from Alteromonas mediterranea (strain DSM 17117 / CIP 110805 / LMG 28347 / Deep ecotype).